A 1103-amino-acid chain; its full sequence is PALM2-AKAP2 fusion protein (1103 aa).

Disordered stretches follow at residues 178 to 197 (ESAS…KKPP) and 304 to 396 (YNGT…SSRD). Residues 179–189 (SASNATETSGP) show a composition bias toward polar residues. Residues serine 322, serine 352, and serine 383 each carry the phosphoserine modification. Residues 380-392 (VPVSPSSTTSSRC) show a composition bias toward low complexity. Residue lysine 405 forms a Glycyl lysine isopeptide (Lys-Gly) (interchain with G-Cter in SUMO1); alternate linkage. Lysine 405 participates in a covalent cross-link: Glycyl lysine isopeptide (Lys-Gly) (interchain with G-Cter in SUMO2); alternate. The stretch at 444 to 521 (EEMLELEKER…QKQLQQQQQQ (78 aa)) forms a coiled coil. Disordered stretches follow at residues 483–544 (EQLD…DKAK) and 566–662 (NSRQ…SKLW). Residues 490–505 (LESHKKYKERKERRAQ) are compositionally biased toward basic and acidic residues. The segment covering 506–521 (QEQLLLQKQLQQQQQQ) has biased composition (low complexity). Residues 522–531 (PPSQLCTAPA) are compositionally biased toward polar residues. Over residues 533–544 (SHERASMIDKAK) the composition is skewed to basic and acidic residues. Residues 566-579 (NSRQAVAKGQSTPR) are compositionally biased toward polar residues. Phosphoserine is present on residues serine 567 and serine 624. Residues 633-643 (AAGSQGNTASQ) show a composition bias toward polar residues. A phosphoserine mark is found at serine 692, serine 696, and serine 748. The span at 745 to 763 (QENSLADFSLPQTPQTDNP) shows a compositional bias: polar residues. Residues 745–794 (QENSLADFSLPQTPQTDNPSEGRGEGVSKSFSDHGFYSPSSTLGDSPLVD) form a disordered region. Threonine 757 bears the Phosphothreonine mark. The segment at 797 to 810 (LEYQAGLLVQNAIQ) is PKA-RII subunit binding domain. The span at 817-829 (VDKAVSKTSRDGA) shows a compositional bias: basic and acidic residues. The tract at residues 817–907 (VDKAVSKTSR…GPINMEETRP (91 aa)) is disordered. Position 862 is a phosphoserine (serine 862). The segment covering 865–886 (QEKRDVLPKILPAEDRALRERG) has biased composition (basic and acidic residues). Positions 941–979 (KLRSRKQRTLSMIEEEIRAAQEREEELKRQRQVLQSTQS) form a coiled coil. Phosphoserine is present on residues serine 951, serine 979, serine 1009, and serine 1016. Residues 962–1035 (EREEELKRQR…AAGTQRPKNL (74 aa)) are disordered. Positions 976–990 (STQSPRTKNAPSLPS) are enriched in polar residues.

Expressed in infantile heart and muscle, and fibroblasts.

Its subcellular location is the apical cell membrane. In terms of biological role, binds to regulatory subunit (RII) of protein kinase A. May be involved in establishing polarity in signaling systems or in integrating PKA-RII isoforms with downstream effectors to capture, amplify and focus diffuse, trans-cellular signals carried by cAMP. Binds to and modulates the structure of the actin cytoskeleton. The sequence is that of PALM2-AKAP2 fusion protein from Homo sapiens (Human).